A 634-amino-acid chain; its full sequence is Sodium-dependent neutral amino acid transporter B(0)AT1 (634 aa).

Topologically, residues 1 to 41 are cytoplasmic; that stretch reads MVRLVLPNPGLDTRILSLAELETIEQEEASSRPKWDNKAQY. Serine 17 carries the phosphoserine modification. The helical transmembrane segment at 42-62 threads the bilayer; that stretch reads LLTCVGFCVGLGNVWRFPYLC. Over 63–65 the chain is Extracellular; that stretch reads QSH. A helical transmembrane segment spans residues 66-86; it reads GGGAFMIPFLILLVLEGIPLL. The Cytoplasmic segment spans residues 87 to 120; that stretch reads HLEFAIGQRLRRGSLGVWSSIHPALKGVGLTSML. Residues 121–141 traverse the membrane as a helical segment; that stretch reads VSFVVGLYYNTIISWIMWYLF. Residues 142–192 lie on the Extracellular side of the membrane; that stretch reads NSFQEPLPWSECPLNENQTGYVDECARSSPVDYFWYRETLNISTSISDSGS. Asparagine 158 and asparagine 182 each carry an N-linked (GlcNAc...) asparagine glycan. Residues 193 to 213 traverse the membrane as a helical segment; sequence IQWRMLLCLACAWSVLYMCTI. Over 214 to 221 the chain is Cytoplasmic; that stretch reads RGIETTGK. A helical transmembrane segment spans residues 222-242; it reads VVYITSTLPYVVLTIFLIRGL. At 243 to 268 the chain is on the extracellular side; that stretch reads TLKGATKGIIYLFTPNVTELANPVTW. A glycan (N-linked (GlcNAc...) asparagine) is linked at asparagine 258. The chain crosses the membrane as a helical span at residues 269-289; the sequence is LDAGAQVFFSFSLAFGGLISF. Residues 290–304 are Cytoplasmic-facing; it reads SSYNSVHNNCERDSV. The chain crosses the membrane as a helical span at residues 305–325; sequence IVSIINGFTSVYVAIVIYSII. Over 326–413 the chain is Extracellular; the sequence is GFRATQRYDD…TEAITKMPVS (88 aa). N-linked (GlcNAc...) asparagine glycosylation is found at asparagine 354 and asparagine 368. Residues 414-434 form a helical membrane-spanning segment; the sequence is PLWSVLFFIMLFCLGLSSMFG. Residues 435-456 are Cytoplasmic-facing; sequence NMEGVVVPLQDLKVIPPKWPKE. Residues 457–477 traverse the membrane as a helical segment; it reads LLTGLICLGTFLIGFIFTLNS. At 478–487 the chain is on the extracellular side; sequence GQYWLSLLDS. A helical transmembrane segment spans residues 488 to 508; sequence YAVSIPLLIIAFCEMFSVVYV. The Cytoplasmic segment spans residues 509–531; the sequence is YGVDRFNKDIEFMIGHKPNIFWQ. The helical transmembrane segment at 532–552 threads the bilayer; that stretch reads VTWRVVSPLLMLIILVFFFVV. Residues 553–581 are Extracellular-facing; that stretch reads QVSQELTYSIWNPGYEEFPKSQKISHPNW. Residues 582-602 form a helical membrane-spanning segment; sequence VYAVVVIVAGVPSLTIPSYAI. Over 603–634 the chain is Cytoplasmic; sequence YKLIRNCCQKPGDRQGLVSTLSTASMNGDLKY. Serine 627 carries the post-translational modification Phosphoserine.

It belongs to the sodium:neurotransmitter symporter (SNF) (TC 2.A.22) family. SLC6A19 subfamily. In terms of assembly, interacts in a tissue-specific manner with ACE2 in small intestine and with CLTRN in the kidney. Interacts with CLTRN; this interaction is required for trafficking of SLC6A19 to the plasma membrane and for its catalytic activation in kidneys. Interacts with ACE2; this interaction is required for trafficking of SLC6A19 to the plasma membrane and for its catalytic activation in intestine. Interacts with ANPEP; the interaction positively regulates its amino acid transporter activity.

It localises to the membrane. It catalyses the reaction L-alanine(in) + Na(+)(in) = L-alanine(out) + Na(+)(out). The catalysed reaction is L-cysteine(in) + Na(+)(in) = L-cysteine(out) + Na(+)(out). The enzyme catalyses L-glutamine(in) + Na(+)(in) = L-glutamine(out) + Na(+)(out). It carries out the reaction glycine(in) + Na(+)(in) = glycine(out) + Na(+)(out). It catalyses the reaction L-isoleucine(in) + Na(+)(in) = L-isoleucine(out) + Na(+)(out). The catalysed reaction is L-leucine(in) + Na(+)(in) = L-leucine(out) + Na(+)(out). The enzyme catalyses L-methionine(in) + Na(+)(in) = L-methionine(out) + Na(+)(out). It carries out the reaction L-phenylalanine(in) + Na(+)(in) = L-phenylalanine(out) + Na(+)(out). It catalyses the reaction L-serine(in) + Na(+)(in) = L-serine(out) + Na(+)(out). The catalysed reaction is L-tryptophan(in) + Na(+)(in) = L-tryptophan(out) + Na(+)(out). The enzyme catalyses L-tyrosine(in) + Na(+)(in) = L-tyrosine(out) + Na(+)(out). It carries out the reaction L-valine(in) + Na(+)(in) = L-valine(out) + Na(+)(out). Functionally, transporter that mediates resorption of neutral amino acids across the apical membrane of renal and intestinal epithelial cells. This uptake is sodium-dependent and chloride-independent. Requires CLTRN in kidney or ACE2 in intestine for cell surface expression and amino acid transporter activity. This is Sodium-dependent neutral amino acid transporter B(0)AT1 (SLC6A19) from Pongo abelii (Sumatran orangutan).